The primary structure comprises 189 residues: Notch ligand osm-11 (189 aa).

Residues 1-18 (MNFITVAALAIVMVLAQA) form the signal peptide.

In terms of assembly, may interact with lin-12/Notch receptor. As to expression, expressed in coelomocytes (at protein level).

It localises to the apical cell membrane. Functionally, probable secreted lin-12/Notch ligand or co-ligand involved in the mediation of Notch signaling. Involved in the lin-12/Notch pathway signaling of cell fate in vulval precursor cells (VPCs), acting redundantly with dsl-1 and lag-2. Required for normal octanol avoidance response, acting via both lin-12/Notch and glp-1/Notch signaling pathways in neurons, in concert with lag-2. Involved in regulation of sleep-like quiescence during the larval to adult transition, acting via Notch receptor activation and in parallel with EGF signaling. The chain is Notch ligand osm-11 from Caenorhabditis elegans.